Reading from the N-terminus, the 740-residue chain is MGTGWRRAFCTTAPRNSDAAAPDLDKQRTGYNLTPSPSPRSCVKLAFLSGGSNPSTPRSTSSPSLRCRTADAQTPTAEQTSTPRSATKSPRLSLAAISNPSSPRSPLKLSLFRNSFKFRSTCGICLNSVKTGQGTAKYTAECSHAFHFPCIADYVRKQGKLVCPVCNSIWKDASLLVPHKNATESPLDDSVSVIQEKRVVVTSSPRAKPRPKQSDYSRFYDDDEPLLSPRFVTIPEADENCGGEEEDDVPQFKGFVVDPNPSFAVKTNEIPVNGRDFGNVQVSLLPEAAVVSVGCGYETRAVALRVKAPPPLTARGGVGRRLLDPSQRAPVDLVVVVDVGGTMNGAKLQMVKRAMRLVISSLGSADRLSIVAVVMTVPKRLLPLKRMTEHGKRSAGAVVDGLLCGQGSNTSEALKKASRVLEDRRERNPVASIVLLTDGQGQLSKVHTNQRSTITNVGSTRFAHIEIPVTEHGFGESGGCSNAPAEEAFAKCIGGLLSVVVQDLRIQIRVGSGSGPCEISAIYLCNGRPTLVSSGSGSVRLGDLYAGEERELLVELRVPSTATRAYQILSVRGLFKDPSTQEVVYGRDQSLRVPQAVRSSSSPRIERLRSLFIATRAVAESRRLVEYGECTSAYHLLTSARALLGQSGTVEAAEYIKVVEAELVEVQWRGQQLMEYQSQHQQQHNQRRRGSERETTTTMTLMDENGEPLTPASAWRAAEKLAKLAMMKKSDLHGFENARF.

The segment at 14–105 (PRNSDAAAPD…AISNPSSPRS (92 aa)) is disordered. Positions 49-67 (SGGSNPSTPRSTSSPSLRC) are enriched in low complexity. Positions 71–90 (DAQTPTAEQTSTPRSATKSP) are enriched in polar residues. Residues 122–167 (CGICLNSVKTGQGTAKYTAECSHAFHFPCIADYVRKQGKLVCPVCN) form an RING-type; atypical zinc finger. The VWFA domain maps to 332-476 (DLVVVVDVGG…IPVTEHGFGE (145 aa)). The segment at 677-709 (QSQHQQQHNQRRRGSERETTTTMTLMDENGEPL) is disordered.

As to quaternary structure, interacts with SINAT1, SINAT2, SINAT3, SINAT4, SINAT5, TOR1/SPR2 and FIP2. In terms of tissue distribution, expressed in root tips and leaf primordia.

It carries out the reaction S-ubiquitinyl-[E2 ubiquitin-conjugating enzyme]-L-cysteine + [acceptor protein]-L-lysine = [E2 ubiquitin-conjugating enzyme]-L-cysteine + N(6)-ubiquitinyl-[acceptor protein]-L-lysine.. E3 ubiquitin-protein ligase involved in the regulation of root growth. Acts as a positive regulator of root gravitropism. Possesses E3 protein ligase activity in vitro. This Arabidopsis thaliana (Mouse-ear cress) protein is E3 ubiquitin-protein ligase WAV3.